The following is an 883-amino-acid chain: DNA mismatch repair protein MutS (883 aa).

Residue 633–640 (GPNMGGKS) coordinates ATP.

This sequence belongs to the DNA mismatch repair MutS family.

This protein is involved in the repair of mismatches in DNA. It is possible that it carries out the mismatch recognition step. This protein has a weak ATPase activity. In Bordetella parapertussis (strain 12822 / ATCC BAA-587 / NCTC 13253), this protein is DNA mismatch repair protein MutS.